A 253-amino-acid chain; its full sequence is 5'/3'-nucleotidase SurE (253 aa).

Residues aspartate 8, aspartate 9, serine 39, and asparagine 92 each contribute to the a divalent metal cation site.

The protein belongs to the SurE nucleotidase family. The cofactor is a divalent metal cation.

The protein localises to the cytoplasm. The catalysed reaction is a ribonucleoside 5'-phosphate + H2O = a ribonucleoside + phosphate. It carries out the reaction a ribonucleoside 3'-phosphate + H2O = a ribonucleoside + phosphate. It catalyses the reaction [phosphate](n) + H2O = [phosphate](n-1) + phosphate + H(+). Its function is as follows. Nucleotidase with a broad substrate specificity as it can dephosphorylate various ribo- and deoxyribonucleoside 5'-monophosphates and ribonucleoside 3'-monophosphates with highest affinity to 3'-AMP. Also hydrolyzes polyphosphate (exopolyphosphatase activity) with the preference for short-chain-length substrates (P20-25). Might be involved in the regulation of dNTP and NTP pools, and in the turnover of 3'-mononucleotides produced by numerous intracellular RNases (T1, T2, and F) during the degradation of various RNAs. The polypeptide is 5'/3'-nucleotidase SurE (Escherichia coli O7:K1 (strain IAI39 / ExPEC)).